We begin with the raw amino-acid sequence, 533 residues long: Beta-apo-4'-carotenal oxygenase (533 aa).

Catalysis depends on residues Glu-226 and Cys-260.

The protein belongs to the aldehyde dehydrogenase family.

It catalyses the reaction 4'-apo-beta-carotenal + NAD(+) + H2O = neurosporaxanthin + NADH + 2 H(+). Beta-apo-4'-carotenal oxygenase involved in the last step of synthesis of neurosporaxanthin, a carboxylic apocarotenoid acting as an essential protective pigment and leading to orange pigmentation. Converts the aldehyde beta-apo-4'-carotenal into neurosporaxanthin. Neurosporaxanthin is synthesized from geranyl-geranyl pyrophosphate (GGPP) through several enzymatic activities. Phytoene synthase activity performed by the bifunctional enzyme al-2 first produces phytoene from geranyl-geranyl pyrophosphate (GGPP). The phytoene dehydrogenase al-1 then introduces 5 desaturations to lead to 3,4-didehydrolycopene via the intermediates phytofluene, zeta-carotene, neurosporene and lycopene. Al-2 cyclase activity then converts 3,4-didehydrolycopene into torulene. Al-2 can also convet lycopene into gamma-carotene which in turn is converted to beta-carotene by an additional al-2 cyclization reaction. Torulene is the substrate of the dioxidase cao-2 that breaks the molecule, removing five carbon atoms to yield beta-apo-4'-carotenal, whereas the aldehyde dehydrogenase ylo-1 mediates the last step by converting beta-apo-4'-carotenal into neurosporaxanthin. This chain is Beta-apo-4'-carotenal oxygenase, found in Neurospora crassa (strain ATCC 24698 / 74-OR23-1A / CBS 708.71 / DSM 1257 / FGSC 987).